A 258-amino-acid chain; its full sequence is MNRIDLSFNKVKEENRKALIPFVTCGADFTVEETADLIVSLEKEGATIVEIGVPFRDPLADGPVIQNAYTKALQNGTKVKDVFRCVELIRGKSEVPIVLMVYFNVVYFTGVENFLRIAAKSGVDGLIVPDVPLEERGDLDKICEDNCIYLIPLVARTSKDRIAAITKGAKGFVYCVSTNGTTGERKTLDSGTHEYLEEVRKNVDIPMCIGFGISSKEVVKEVKDYCDGVIVGSAIVKRMAEGKEAVIDFVKDLSDGLK.

Catalysis depends on proton acceptor residues E50 and D61.

Belongs to the TrpA family. Tetramer of two alpha and two beta chains.

The catalysed reaction is (1S,2R)-1-C-(indol-3-yl)glycerol 3-phosphate + L-serine = D-glyceraldehyde 3-phosphate + L-tryptophan + H2O. Its pathway is amino-acid biosynthesis; L-tryptophan biosynthesis; L-tryptophan from chorismate: step 5/5. Its function is as follows. The alpha subunit is responsible for the aldol cleavage of indoleglycerol phosphate to indole and glyceraldehyde 3-phosphate. This is Tryptophan synthase alpha chain from Clostridium beijerinckii (strain ATCC 51743 / NCIMB 8052) (Clostridium acetobutylicum).